Consider the following 1237-residue polypeptide: Tyrosine-protein kinase sid-3 (1237 aa).

In terms of domain architecture, Protein kinase spans 107-369 (IKLYELIGEG…REDLVAAMFL (263 aa)). Residues 113-121 (IGEGSFAVV) and K139 contribute to the ATP site. D230 serves as the catalytic Proton acceptor. Residues 366–426 (AMFLDAVARE…PRSVVFAQTN (61 aa)) form the SH3 domain. Disordered stretches follow at residues 683–704 (NQGSSTGNGVRPRPASSIGIQN), 741–802 (PPAP…APVQ), 826–919 (IQPQ…EERR), 940–986 (SNST…SEPI), 999–1018 (SATTSQAKPVTQPIRHPSPP), and 1134–1156 (QQRQAGSSSRAVPPASASTSAAS). Polar residues-rich tracts occupy residues 749-766 (QPVSSQRVAQQQQNTLQK), 778-791 (KRPTGTTAPPSNGF), and 847-863 (SAPTHSNVAPTTSSQAS). 2 stretches are compositionally biased toward low complexity: residues 881–910 (TPITVAPVHAAPTTSAPSTSVVTRRPTSTT) and 940–961 (SNSTSSLPSAAVSTASSVPSTA). Residues 1138 to 1156 (AGSSSRAVPPASASTSAAS) are compositionally biased toward low complexity.

The protein belongs to the protein kinase superfamily. Tyr protein kinase family. SYK/ZAP-70 subfamily. Ubiquitously present in all tissues tested. Expressed in the somatic cells of gut, pharynx, body wall muscle, neurons, skin and excretory canal cells.

It localises to the cytoplasm. The catalysed reaction is L-tyrosyl-[protein] + ATP = O-phospho-L-tyrosyl-[protein] + ADP + H(+). Its function is as follows. Tyrosine-protein kinase which plays a role in RNA-mediated gene silencing by mediating import of double-stranded RNA (dsRNA) into cells. Not required for import of ingested dsRNA into intestinal cells but involved in subsequent export from intestinal cells to internal tissues. The protein is Tyrosine-protein kinase sid-3 (sid-3) of Caenorhabditis elegans.